Here is a 185-residue protein sequence, read N- to C-terminus: Ribosome-recycling factor (185 aa).

A disordered region spans residues 142 to 161 (LVKDGEAGEDEGARAEKELD).

It belongs to the RRF family.

The protein localises to the cytoplasm. In terms of biological role, responsible for the release of ribosomes from messenger RNA at the termination of protein biosynthesis. May increase the efficiency of translation by recycling ribosomes from one round of translation to another. The sequence is that of Ribosome-recycling factor from Paenarthrobacter aurescens (strain TC1).